The primary structure comprises 366 residues: Glutamate 5-kinase (366 aa).

Lys-17 provides a ligand contact to ATP. Positions 57, 144, and 156 each coordinate substrate. Residues 176–177 (SD) and 216–222 (TGGMASK) each bind ATP. The PUA domain maps to 278–352 (RGALVLDDGA…GRSTTELPDT (75 aa)).

Belongs to the glutamate 5-kinase family.

It localises to the cytoplasm. The catalysed reaction is L-glutamate + ATP = L-glutamyl 5-phosphate + ADP. It functions in the pathway amino-acid biosynthesis; L-proline biosynthesis; L-glutamate 5-semialdehyde from L-glutamate: step 1/2. Functionally, catalyzes the transfer of a phosphate group to glutamate to form L-glutamate 5-phosphate. The chain is Glutamate 5-kinase from Nocardia farcinica (strain IFM 10152).